The following is a 707-amino-acid chain: Protein O-mannosyl-transferase TMEM260 (707 aa).

A run of 8 helical transmembrane segments spans residues 28–48 (GGVA…PPSV), 71–91 (YPLF…GSIA), 94–114 (VNLL…FTVF), 141–161 (IAAE…ALTV), 189–209 (NQHT…FQLL), 222–242 (LSLY…SSYL), 318–338 (NPSL…FFAW), and 356–376 (FWMQ…AAVV). At 377 to 707 (SETNRVLNSN…LQSLRNRKNV (331 aa)) the chain is on the lumenal side. N-linked (GlcNAc...) asparagine glycans are attached at residues Asn-407, Asn-535, and Asn-568.

The protein belongs to the glycosyltransferase 117 (GT117) family. In terms of tissue distribution, expressed in brain, heart, kidney, liver, lung, pancreas and placenta but are not detected in skeletal muscle.

It is found in the endoplasmic reticulum membrane. The protein resides in the membrane. It carries out the reaction a di-trans,poly-cis-dolichyl beta-D-mannosyl phosphate + L-seryl-[protein] = 3-O-(alpha-D-mannosyl)-L-seryl-[protein] + a di-trans,poly-cis-dolichyl phosphate + H(+). The enzyme catalyses a di-trans,poly-cis-dolichyl beta-D-mannosyl phosphate + L-threonyl-[protein] = 3-O-(alpha-D-mannosyl)-L-threonyl-[protein] + a di-trans,poly-cis-dolichyl phosphate + H(+). Its function is as follows. O-mannosyl-transferase that transfers mannosyl residues to the hydroxyl group of serine or threonine residues of proteins. Specifically glycosylates the IPT/TIG domain of target proteins, such as MET and MST1R/RON. TMEM260-mediated O-mannosylated residues are composed of single mannose glycans that are not elongated or modified. This Homo sapiens (Human) protein is Protein O-mannosyl-transferase TMEM260.